The primary structure comprises 248 residues: uncharacterized protein (248 aa).

Residue 9-33 (IITGASSGIGKATALLLAEKGAKLV) participates in NADP(+) binding. Ser141 is a binding site for substrate. The Proton acceptor role is filled by Tyr154.

The protein belongs to the short-chain dehydrogenases/reductases (SDR) family.

This is an uncharacterized protein from Listeria monocytogenes serovar 1/2a (strain ATCC BAA-679 / EGD-e).